The primary structure comprises 271 residues: Cytosolic Fe-S cluster assembly factor NUBP2 (271 aa).

M1 is subject to N-acetylmethionine. 22–29 contacts ATP; that stretch reads GKGGVGKS. [4Fe-4S] cluster-binding residues include C196 and C199.

This sequence belongs to the Mrp/NBP35 ATP-binding proteins family. NUBP2/CFD1 subfamily. In terms of assembly, heterotetramer of 2 NUBP1 and 2 NUBP2 chains. Interacts with KIFC1. Interacts with NUBP1. It depends on [4Fe-4S] cluster as a cofactor. Widely expressed with highest expression in skeletal muscle.

The protein resides in the nucleus. The protein localises to the cytoplasm. Its subcellular location is the cytoskeleton. It localises to the microtubule organizing center. It is found in the centrosome. The protein resides in the cilium axoneme. The protein localises to the centriole. Its function is as follows. Component of the cytosolic iron-sulfur (Fe/S) protein assembly (CIA) machinery. Required for maturation of extramitochondrial Fe-S proteins. The NUBP1-NUBP2 heterotetramer forms a Fe-S scaffold complex, mediating the de novo assembly of an Fe-S cluster and its transfer to target apoproteins. Negatively regulates cilium formation and structure. The protein is Cytosolic Fe-S cluster assembly factor NUBP2 of Homo sapiens (Human).